The primary structure comprises 105 residues: BLOC-1-related complex subunit 7 (105 aa).

Belongs to the BORCS7 family. As to quaternary structure, component of the BLOC-one-related complex (BORC) which is composed of BLOC1S1, BLOC1S2, BORCS5, BORCS6, BORCS7, BORCS8, KXD1 and SNAPIN.

It is found in the lysosome membrane. As part of the BORC complex may play a role in lysosomes movement and localization at the cell periphery. Associated with the cytosolic face of lysosomes, the BORC complex may recruit ARL8B and couple lysosomes to microtubule plus-end-directed kinesin motor. This chain is BLOC-1-related complex subunit 7, found in Bos taurus (Bovine).